An 898-amino-acid polypeptide reads, in one-letter code: Aconitate hydratase 1 (898 aa).

Residue A2 is modified to N-acetylalanine. Residues Q90 and 209–211 (DSH) each bind substrate. Residues C441, C507, and C510 each contribute to the [4Fe-4S] cluster site. Substrate contacts are provided by residues R540, R545, R703, and 784–785 (SR).

Belongs to the aconitase/IPM isomerase family. Monomer. [4Fe-4S] cluster serves as cofactor. As to expression, mostly expressed in roots, stems and leaves, also present in stems and flowers.

Its subcellular location is the cytoplasm. It is found in the mitochondrion. It carries out the reaction citrate = D-threo-isocitrate. Its pathway is carbohydrate metabolism; tricarboxylic acid cycle; isocitrate from oxaloacetate: step 2/2. Catalyzes the isomerization of citrate to isocitrate via cis-aconitate. Contributes to oxidative stress tolerance. May have a role in respiration. The sequence is that of Aconitate hydratase 1 from Arabidopsis thaliana (Mouse-ear cress).